Reading from the N-terminus, the 886-residue chain is Kinesin-like protein KIF18A (886 aa).

The region spanning R11–I355 is the Kinesin motor domain. Residue K24 forms a Glycyl lysine isopeptide (Lys-Gly) (interchain with G-Cter in SUMO2) linkage. Residue G113–T120 coordinates ATP. Residues I370 to N404 are a coiled coil. Residue S674 is modified to Phosphoserine. A Glycyl lysine isopeptide (Lys-Gly) (interchain with G-Cter in SUMO2) cross-link involves residue K683. S695 is subject to Phosphoserine. A disordered region spans residues E774 to G804. Residue K782 forms a Glycyl lysine isopeptide (Lys-Gly) (interchain with G-Cter in SUMO2) linkage. At S826 the chain carries Phosphoserine. A Glycyl lysine isopeptide (Lys-Gly) (interchain with G-Cter in SUMO2) cross-link involves residue K862. Residues K862–Q886 are disordered.

This sequence belongs to the TRAFAC class myosin-kinesin ATPase superfamily. Kinesin family. As to quaternary structure, interacts with CENPE and ESR1. Glycosylated. In terms of processing, ubiquitinated.

It is found in the cell projection. The protein localises to the ruffle. It localises to the cytoplasm. The protein resides in the nucleus. Its subcellular location is the cytoskeleton. It is found in the microtubule organizing center. The protein localises to the centrosome. Functionally, microtubule-depolymerizing kinesin which plays a role in chromosome congression by reducing the amplitude of preanaphase oscillations and slowing poleward movement during anaphase, thus suppressing chromosome movements. May stabilize the CENPE-BUB1B complex at the kinetochores during early mitosis and maintains CENPE levels at kinetochores during chromosome congression. The polypeptide is Kinesin-like protein KIF18A (Kif18a) (Mus musculus (Mouse)).